Consider the following 56-residue polypeptide: Large ribosomal subunit protein bL32 (56 aa).

Residues 1–26 (MAVQQNKKSRSKRGMRRSHDALSTAQ) are disordered. Over residues 7–16 (KKSRSKRGMR) the composition is skewed to basic residues.

It belongs to the bacterial ribosomal protein bL32 family.

This Shewanella baltica (strain OS155 / ATCC BAA-1091) protein is Large ribosomal subunit protein bL32.